A 316-amino-acid polypeptide reads, in one-letter code: Beta-ketoacyl-[acyl-carrier-protein] synthase III 1 (316 aa).

Residues C112 and H243 contribute to the active site. The segment at 244–248 (QANYR) is ACP-binding. The active site involves N273.

It belongs to the thiolase-like superfamily. FabH family. Homodimer.

It localises to the cytoplasm. The enzyme catalyses malonyl-[ACP] + acetyl-CoA + H(+) = 3-oxobutanoyl-[ACP] + CO2 + CoA. Its pathway is lipid metabolism; fatty acid biosynthesis. Functionally, catalyzes the condensation reaction of fatty acid synthesis by the addition to an acyl acceptor of two carbons from malonyl-ACP. Catalyzes the first condensation reaction which initiates fatty acid synthesis and may therefore play a role in governing the total rate of fatty acid production. Possesses both acetoacetyl-ACP synthase and acetyl transacylase activities. Its substrate specificity determines the biosynthesis of branched-chain and/or straight-chain of fatty acids. In Vibrio cholerae serotype O1 (strain ATCC 39315 / El Tor Inaba N16961), this protein is Beta-ketoacyl-[acyl-carrier-protein] synthase III 1.